The following is a 41-amino-acid chain: Photosystem I reaction center subunit IX (41 aa).

A helical membrane pass occupies residues 7 to 27 (YLSTAPVLATLWFGFLAGLLI).

It belongs to the PsaJ family.

The protein localises to the plastid. The protein resides in the chloroplast thylakoid membrane. In terms of biological role, may help in the organization of the PsaE and PsaF subunits. This is Photosystem I reaction center subunit IX from Physcomitrium patens (Spreading-leaved earth moss).